Reading from the N-terminus, the 123-residue chain is Large ribosomal subunit protein bL12 (123 aa).

It belongs to the bacterial ribosomal protein bL12 family. Homodimer. Part of the ribosomal stalk of the 50S ribosomal subunit. Forms a multimeric L10(L12)X complex, where L10 forms an elongated spine to which 2 to 4 L12 dimers bind in a sequential fashion. Binds GTP-bound translation factors.

In terms of biological role, forms part of the ribosomal stalk which helps the ribosome interact with GTP-bound translation factors. Is thus essential for accurate translation. The chain is Large ribosomal subunit protein bL12 from Rhodopseudomonas palustris (strain BisB18).